Consider the following 655-residue polypeptide: MKSLLFSILLIYLIQLVRSEECTDKHIHCFFWSQEGECEVNPRWMKKHCQKACGTCSLTSPTPLTRQQDVPTARTFDDQQDRQFLPSRPSSIPEGCNSVMTVEAETRRIFSSGQLTARFRQQMCAEEQVAPDCSINQCFHKKYRSMDGTCNNLQNPVKGAAFTAFTRLMPAAYDDGFNTLVSASRRNRPNPREVSVFLLSSERSLPGHVNSLLMLFGQFVSHDITSNAAQNFCGCQNSGPMCASIFAPPSDRSRRCIPFTRSFPICGTGQFGRVREQLNMNTAAIDASLIYGSEAITARSLRFAAMLRTSMIGGRMFPPNTNPGSLTAGDGRAILFVGLAALHTSFLRLHNNVAARLQNMNRHWNADRIFQESRKIVGGIVQVITYQEFVPELIGDASKTILGAYNGYNPNVEIGVLNEFAAGAYRLHGMIQETYPLVNSQFQEVNRYRFIDGVNNINHVLNNIDAIYRGMMTVPVRSPQRLTTSVTERLFGGSVDMAAVNIQRGRDHGLRSYNDYRRFCNLRPITSFNDWPEVPDENVRQRIGQLYRTPDDLDFYVGGILEQPAAGSLLGATFACVIGKQFERLRDGDRFYYENPGVFTSPQLAELKRTTLSWVLCQTGDNMVRVGRRAFDIENGSRAVPCSSITGLNLEAWRE.

The N-terminal stretch at 1-19 (MKSLLFSILLIYLIQLVRS) is a signal peptide. The ShKT domain maps to 22–56 (CTDKHIHCFFWSQEGECEVNPRWMKKHCQKACGTC). Cystine bridges form between Cys-22-Cys-56, Cys-29-Cys-49, Cys-38-Cys-53, and Cys-133-Cys-150. His-222 acts as the Proton acceptor in catalysis. Residue His-428 coordinates heme b. Cystine bridges form between Cys-520/Cys-576 and Cys-617/Cys-642.

It belongs to the peroxidase family. XPO subfamily. The cofactor is heme b. Exclusively expressed in hypodermis.

It carries out the reaction 2 a phenolic donor + H2O2 = 2 a phenolic radical donor + 2 H2O. Functionally, involved in hypodermal immune response against some types of bacterial infection. Probably utilizes H(2)O(2) produced by the NADPH oxidase bli-3. May play a role in cuticule biosynthesis. This chain is Peroxidase skpo-1, found in Caenorhabditis elegans.